Consider the following 207-residue polypeptide: LexA repressor (207 aa).

Residues 28-48 (RAEIAQKLGFKSANAAEEHLK) constitute a DNA-binding region (H-T-H motif). Catalysis depends on for autocatalytic cleavage activity residues Ser124 and Lys161.

This sequence belongs to the peptidase S24 family. As to quaternary structure, homodimer.

It carries out the reaction Hydrolysis of Ala-|-Gly bond in repressor LexA.. Functionally, represses a number of genes involved in the response to DNA damage (SOS response), including recA and lexA. In the presence of single-stranded DNA, RecA interacts with LexA causing an autocatalytic cleavage which disrupts the DNA-binding part of LexA, leading to derepression of the SOS regulon and eventually DNA repair. The sequence is that of LexA repressor from Aeromonas hydrophila subsp. hydrophila (strain ATCC 7966 / DSM 30187 / BCRC 13018 / CCUG 14551 / JCM 1027 / KCTC 2358 / NCIMB 9240 / NCTC 8049).